We begin with the raw amino-acid sequence, 391 residues long: Aminoacetone oxidase (391 aa).

FAD contacts are provided by Ala14, Glu33, Ile134, Glu362, Asn374, and Ile375.

It belongs to the BaiN/RdsA family. Monomer. FAD is required as a cofactor.

Flavoprotein that probably catalyzes the condensation of two molecules of aminoacetone to yield 3,6-dimethyl-2,5-dihydropyrazine, which is subsequently oxidized to 2,5-dimethylpyrazine. It could be involved in a microbial defense mechanism related to aminoacetone catabolism through a pathway yielding dimethylpyrazine derivatives instead of methylglyoxal. It has also low aminoacetone oxidase activity, and can produce hydrogen peroxide from aminoacetone. In addition, it shows very low L-amino acid oxidase activity, and can produce hydrogen peroxide from peptone and from seven amino acids, L-aspartate, L-tryptophan, L-lysine, L-isoleucine, L-arginine, L-asparagine and L-glutamine. It cannot use L-malate, oxaloacetate or alpha-aminobutyrate. Plays a role in antioxidant defense. This Streptococcus cristatus protein is Aminoacetone oxidase.